The primary structure comprises 620 residues: Glutathione-regulated potassium-efflux system protein KefC (620 aa).

Residues 1–3 (MDS) are Periplasmic-facing. A helical transmembrane segment spans residues 4 to 24 (HTLVQALIYLGSAALIVPIAV). Residue Arg-25 is a topological domain, cytoplasmic. A helical transmembrane segment spans residues 26–46 (LGLGSVLGYLIAGCIIGPWGL). Residues 47-53 (RLVTDAE) lie on the Periplasmic side of the membrane. The helical transmembrane segment at 54–74 (SILHFAEIGVVLMLFIIGLEL) threads the bilayer. Topologically, residues 75-89 (DPQRLWKLRAAVFGG) are cytoplasmic. Residues 90-110 (GALQMVICGGLLGLFCMLLGL) form a helical membrane-spanning segment. The Periplasmic portion of the chain corresponds to 111–113 (RWQ). A helical transmembrane segment spans residues 114–134 (VAELIGMTLALSSTAIAMQAM). The Cytoplasmic segment spans residues 135 to 148 (NERNLMVTQMGRSA). A helical transmembrane segment spans residues 149–169 (FAVLLFQDIAAIPLVAMIPLL). Residues 170–177 (AASSASTT) are Periplasmic-facing. A helical membrane pass occupies residues 178–198 (MGAFALSALKVAGALVLVVLL). The Cytoplasmic portion of the chain corresponds to 199 to 213 (GRYVTRPALRFVARS). The chain crosses the membrane as a helical span at residues 214–233 (GLREVFSAVALFLVFGFGLL). Over 234-236 (LEE) the chain is Periplasmic. The chain crosses the membrane as a helical span at residues 237 to 254 (VGLSMAMGAFLAGVLLAS). The Cytoplasmic portion of the chain corresponds to 255–269 (SEYRHALESDIEPFK). Residues 270–290 (GLLLGLFFIGVGMSIDFGTLI) form a helical membrane-spanning segment. The Periplasmic portion of the chain corresponds to 291–293 (ENP). A helical membrane pass occupies residues 294–314 (LRIVILLLGFLIIKIAMLWLI). Residues 315–326 (ARPLQVPNKQRR) are Cytoplasmic-facing. The helical transmembrane segment at 327-347 (WFAVLLGQGSEFAFVVFGAAQ) threads the bilayer. Residues 348–358 (MANVLEPEWAK) are Periplasmic-facing. A helical transmembrane segment spans residues 359 to 379 (SLTLAVALSMAATPILLVILN). The Cytoplasmic segment spans residues 380-620 (RLEQSSTEEA…ADEPETKPSS (241 aa)). One can recognise an RCK N-terminal domain in the interval 399–518 (QPRVIIAGFG…AGVEKPERET (120 aa)). The disordered stretch occupies residues 597–620 (GWQGTEEGKHTGNMADEPETKPSS).

The protein belongs to the monovalent cation:proton antiporter 2 (CPA2) transporter (TC 2.A.37) family. KefC subfamily. Homodimer. Interacts with the regulatory subunit KefF.

The protein resides in the cell inner membrane. Pore-forming subunit of a potassium efflux system that confers protection against electrophiles. Catalyzes K(+)/H(+) antiport. The protein is Glutathione-regulated potassium-efflux system protein KefC of Escherichia coli O157:H7.